Here is a 544-residue protein sequence, read N- to C-terminus: Tyrosine-protein kinase fynb (544 aa).

Gly2 carries N-myristoyl glycine lipidation. S-palmitoyl cysteine attachment occurs at residues Cys3 and Cys6. In terms of domain architecture, SH3 spans Thr89–Ser150. One can recognise an SH2 domain in the interval Trp156–Cys253. One can recognise a Protein kinase domain in the interval Leu278–Phe531. ATP-binding positions include Leu284–Val292 and Lys306. Asp397 (proton acceptor) is an active-site residue. A Phosphotyrosine; by autocatalysis modification is found at Tyr427. Tyr538 bears the Phosphotyrosine mark.

It belongs to the protein kinase superfamily. Tyr protein kinase family. SRC subfamily. Requires Mn(2+) as cofactor.

The protein localises to the cytoplasm. The enzyme catalyses L-tyrosyl-[protein] + ATP = O-phospho-L-tyrosyl-[protein] + ADP + H(+). With respect to regulation, inhibited by phosphorylation of Tyr-538 by leukocyte common antigen and activated by dephosphorylation of this site. Tyrosine-protein kinase implicated in the control of cell growth. Plays a role in the regulation of intracellular calcium levels. Required in brain development and mature brain function with important roles in the regulation of axon growth, axon guidance, and neurite extension. Role in CNTN1-mediated signaling. This Danio rerio (Zebrafish) protein is Tyrosine-protein kinase fynb (fynb).